The primary structure comprises 826 residues: Periplasmic nitrate reductase (826 aa).

The segment at residues 1 to 32 is a signal peptide (tat-type signal); sequence MELNRRDFMKANAAIAAAAAAGITIPVKNVQA. The 4Fe-4S Mo/W bis-MGD-type domain maps to 37-93; sequence IRWDKAPCRYCGTGCSVLVGTKDGRVVATQGDPDAEVNRGLNCIKGYFLSKIMYGAD. Cysteine 44, cysteine 47, cysteine 51, and cysteine 79 together coordinate [4Fe-4S] cluster. Mo-bis(molybdopterin guanine dinucleotide) contacts are provided by residues lysine 81, glutamine 148, asparagine 173, cysteine 177, 210 to 217, 241 to 245, 260 to 262, methionine 370, glutamine 374, asparagine 480, 506 to 507, lysine 529, aspartate 556, and 716 to 725; these read WGSNMAEM, STYEH, QSD, SD, and TGRVLEHWHT. Phenylalanine 792 is a substrate binding site. Positions 800 and 817 each coordinate Mo-bis(molybdopterin guanine dinucleotide).

The protein belongs to the prokaryotic molybdopterin-containing oxidoreductase family. NasA/NapA/NarB subfamily. As to quaternary structure, component of the periplasmic nitrate reductase NapAB complex composed of NapA and NapB. Requires [4Fe-4S] cluster as cofactor. Mo-bis(molybdopterin guanine dinucleotide) serves as cofactor. Predicted to be exported by the Tat system. The position of the signal peptide cleavage has not been experimentally proven.

The protein localises to the periplasm. It catalyses the reaction 2 Fe(II)-[cytochrome] + nitrate + 2 H(+) = 2 Fe(III)-[cytochrome] + nitrite + H2O. Catalytic subunit of the periplasmic nitrate reductase complex NapAB. Receives electrons from NapB and catalyzes the reduction of nitrate to nitrite. This Actinobacillus succinogenes (strain ATCC 55618 / DSM 22257 / CCUG 43843 / 130Z) protein is Periplasmic nitrate reductase.